Here is a 349-residue protein sequence, read N- to C-terminus: AdoMet-dependent heme synthase (349 aa).

A Radical SAM core domain is found at 5–214; it reads TNAPRLIAWE…LHWFYEMQKE (210 aa). [4Fe-4S] cluster-binding residues include cysteine 19, cysteine 23, and cysteine 26.

This sequence belongs to the radical SAM superfamily. [4Fe-4S] cluster serves as cofactor.

The enzyme catalyses Fe-coproporphyrin III + 2 S-adenosyl-L-methionine = heme b + 2 5'-deoxyadenosine + 2 L-methionine + 2 CO2. It participates in porphyrin-containing compound metabolism; protoheme biosynthesis. In terms of biological role, involved in siroheme-dependent heme b biosynthesis. Catalyzes the conversion of Fe-coproporphyrin III into heme by the oxidative decarboxylation of two propionate side chains. This Methanosarcina barkeri (strain Fusaro / DSM 804) protein is AdoMet-dependent heme synthase.